The chain runs to 381 residues: 3-dehydroquinate synthase (381 aa).

Residues 81-86, 115-119, 139-140, K152, and K161 contribute to the NAD(+) site; these read EGEVSK, GVVGD, and TS. 3 residues coordinate Zn(2+): E194, H256, and H274.

Belongs to the sugar phosphate cyclases superfamily. Dehydroquinate synthase family. Co(2+) is required as a cofactor. Zn(2+) serves as cofactor. It depends on NAD(+) as a cofactor.

Its subcellular location is the cytoplasm. The catalysed reaction is 7-phospho-2-dehydro-3-deoxy-D-arabino-heptonate = 3-dehydroquinate + phosphate. Its pathway is metabolic intermediate biosynthesis; chorismate biosynthesis; chorismate from D-erythrose 4-phosphate and phosphoenolpyruvate: step 2/7. In terms of biological role, catalyzes the conversion of 3-deoxy-D-arabino-heptulosonate 7-phosphate (DAHP) to dehydroquinate (DHQ). This Rhodopseudomonas palustris (strain BisA53) protein is 3-dehydroquinate synthase.